Here is a 234-residue protein sequence, read N- to C-terminus: Isoprenyl transferase (234 aa).

D13 is an active-site residue. D13 serves as a coordination point for Mg(2+). Residues 14 to 17, W18, R26, H30, and 58 to 60 contribute to the substrate site; these read GNGR and STE. N61 functions as the Proton acceptor in the catalytic mechanism. Residues W62, R64, R180, and 186–188 contribute to the substrate site; that span reads RLS. E199 serves as a coordination point for Mg(2+).

Belongs to the UPP synthase family. In terms of assembly, homodimer. Mg(2+) is required as a cofactor.

Its function is as follows. Catalyzes the condensation of isopentenyl diphosphate (IPP) with allylic pyrophosphates generating different type of terpenoids. In Helicobacter pylori (strain ATCC 700392 / 26695) (Campylobacter pylori), this protein is Isoprenyl transferase (uppS).